The following is a 327-amino-acid chain: Vacuolar protein sorting-associated protein 26A (327 aa).

The segment at 306 to 327 (RTNFHQRFESPESQASAEQPEM) is disordered. Serine 315 carries the post-translational modification Phosphoserine. Over residues 316–327 (PESQASAEQPEM) the composition is skewed to polar residues.

The protein belongs to the VPS26 family. Component of the heterotrimeric retromer cargo-selective complex (CSC), also described as vacuolar protein sorting subcomplex (VPS), formed by VPS26 (VPS26A or VPS26B), VPS29 and VPS35. The CSC has a highly elongated structure with VPS26 and VPS29 binding independently at opposite distal ends of VPS35 as central platform. The CSC is believed to associate with variable sorting nexins to form functionally distinct retromer complex variants. The originally described retromer complex (also called SNX-BAR retromer) is a pentamer containing the CSC and a heterodimeric membrane-deforming subcomplex formed between SNX1 or SNX2 and SNX5 or SNX6 (also called SNX-BAR subcomplex); the respective CSC and SNX-BAR subcomplexes associate with low affinity. The CSC associates with SNX3 to form a SNX3-retromer complex. The CSC associates with SNX27, the WASH complex and the SNX-BAR subcomplex to form the SNX27-retromer complex. Interacts with VPS29, VPS35, SNX27, SNX1, SNX2, SNX5, SNX6, SNX3, RAB7A, ECPAS, EHD1, WASHC5, SORL1.

It is found in the cytoplasm. Its subcellular location is the endosome membrane. It localises to the early endosome. In terms of biological role, acts as a component of the retromer cargo-selective complex (CSC). The CSC is believed to be the core functional component of retromer or respective retromer complex variants acting to prevent missorting of selected transmembrane cargo proteins into the lysosomal degradation pathway. The recruitment of the CSC to the endosomal membrane involves RAB7A and SNX3. The SNX-BAR retromer mediates retrograde transport of cargo proteins from endosomes to the trans-Golgi network (TGN) and is involved in endosome-to-plasma membrane transport for cargo protein recycling. The SNX3-retromer mediates the retrograde endosome-to-TGN transport of WLS distinct from the SNX-BAR retromer pathway. The SNX27-retromer is believed to be involved in endosome-to-plasma membrane trafficking and recycling of a broad spectrum of cargo proteins. The CSC complex seems to act as recruitment hub for other proteins, such as the WASH complex and TBC1D5. Required for retrograde transport of lysosomal enzyme receptor IGF2R. Required to regulate transcytosis of the polymeric immunoglobulin receptor (pIgR-pIgA). Required for the endosomal localization of WASHC2 (indicative for the WASH complex). Required for the endosomal localization of TBC1D5. Mediates retromer cargo recognition of SORL1 and is involved in trafficking of SORL1 implicated in sorting and processing of APP. Involved in retromer-independent lysosomal sorting of F2R. Involved in recycling of ADRB2. Acts redundantly with VSP26B in SNX-27 mediated endocytic recycling of SLC2A1/GLUT1. Enhances the affinity of SNX27 for PDZ-binding motifs in cargo proteins. The sequence is that of Vacuolar protein sorting-associated protein 26A (VPS26A) from Bos taurus (Bovine).